Consider the following 220-residue polypeptide: Putative cobalt transport protein CbiM (220 aa).

The next 6 helical transmembrane spans lie at G6–Y26, I45–G65, G74–L94, T107–F127, L153–V173, and I188–S208.

This sequence belongs to the CbiM family. Forms an energy-coupling factor (ECF) transporter complex composed of an ATP-binding protein (A component, CbiO), a transmembrane protein (T component, CbiQ) and 2 possible substrate-capture proteins (S components, CbiM and CbiN) of unknown stoichimetry.

It localises to the cell membrane. Its pathway is cofactor biosynthesis; adenosylcobalamin biosynthesis. In terms of biological role, part of the energy-coupling factor (ECF) transporter complex CbiMNOQ involved in cobalt import. This Halobacterium salinarum (strain ATCC 29341 / DSM 671 / R1) protein is Putative cobalt transport protein CbiM.